A 266-amino-acid polypeptide reads, in one-letter code: Putative carbamate hydrolase RutD (266 aa).

This sequence belongs to the AB hydrolase superfamily. Hydrolase RutD family.

It catalyses the reaction carbamate + 2 H(+) = NH4(+) + CO2. In terms of biological role, involved in pyrimidine catabolism. May facilitate the hydrolysis of carbamate, a reaction that can also occur spontaneously. In Escherichia coli O7:K1 (strain IAI39 / ExPEC), this protein is Putative carbamate hydrolase RutD.